Reading from the N-terminus, the 403-residue chain is PP2A regulatory subunit TAP46 (403 aa).

Disordered stretches follow at residues 158–184 (ERRG…LDDD) and 351–403 (ANSS…TPCG). Composition is skewed to acidic residues over residues 174-184 (ETEEDDVLDDD) and 366-375 (EDDEEDDDDA). A compositionally biased stretch (basic and acidic residues) spans 376 to 391 (AQDKARAWDDWKDDNP).

Belongs to the IGBP1/TAP42 family. Interacts with NPP4 and NPP5, two catalytic subunits (subunit C) of PP2A.

Its subcellular location is the cytoplasm. The protein localises to the nucleus. In terms of biological role, involved in the regulation of the TOR signaling pathway. Seems to act as a regulator of PP2A catalytic activity. The polypeptide is PP2A regulatory subunit TAP46 (Nicotiana benthamiana).